A 194-amino-acid chain; its full sequence is MRKWILTWILPSLLHRSCFHIICLVGTLSLDCNDMTPEQMATNVNCSSPERHTRSYDYMEGGDIRVRRLFCRTQWYPRIGKRGKVKGTQEMKNNYNIMEIRTVAVGIVAIKGVVSEYYLAMNKEGKLYAKKEYNEDCNFKELILENHYNTYASAKWTHSGGEMFVALNQKGVPVRGKKTKKEQKTAHFLPMAIT.

Positions 1 to 31 are cleaved as a signal peptide; it reads MRKWILTWILPSLLHRSCFHIICLVGTLSLD. Residue asparagine 45 is glycosylated (N-linked (GlcNAc...) asparagine).

This sequence belongs to the heparin-binding growth factors family. In terms of assembly, interacts with FGFBP1. Interacts with FGFR2. Affinity between fibroblast growth factors (FGFs) and their receptors is increased by heparan sulfate glycosaminoglycans that function as coreceptors.

The protein resides in the secreted. Functionally, plays an important role in the regulation of embryonic development, cell proliferation and cell differentiation. Required for normal branching morphogenesis. Growth factor active on keratinocytes. Possible major paracrine effector of normal epithelial cell proliferation. In Sus scrofa (Pig), this protein is Fibroblast growth factor 7 (FGF7).